The chain runs to 553 residues: Hydroxylamine reductase (553 aa).

[2Fe-2S] cluster-binding residues include C3, C6, C18, and C25. Hybrid [4Fe-2O-2S] cluster is bound by residues H249, E273, C317, C405, C433, C459, E493, and K495. C405 carries the cysteine persulfide modification.

Belongs to the HCP family. [2Fe-2S] cluster is required as a cofactor. The cofactor is hybrid [4Fe-2O-2S] cluster.

Its subcellular location is the cytoplasm. The catalysed reaction is A + NH4(+) + H2O = hydroxylamine + AH2 + H(+). In terms of biological role, catalyzes the reduction of hydroxylamine to form NH(3) and H(2)O. The protein is Hydroxylamine reductase of Actinobacillus succinogenes (strain ATCC 55618 / DSM 22257 / CCUG 43843 / 130Z).